The primary structure comprises 76 residues: Virulence-associated protein VagC (76 aa).

Positions 4–45 constitute a SpoVT-AbrB domain; that stretch reads VSIFKNGNNRAIRLPRDLDFEGVSELEIVREGDSIILRPVRP.

The protein belongs to the VapB family.

The protein is Virulence-associated protein VagC (vagC) of Salmonella dublin.